A 689-amino-acid chain; its full sequence is Glycine--tRNA ligase beta subunit (689 aa).

The protein belongs to the class-II aminoacyl-tRNA synthetase family. Tetramer of two alpha and two beta subunits.

It is found in the cytoplasm. It catalyses the reaction tRNA(Gly) + glycine + ATP = glycyl-tRNA(Gly) + AMP + diphosphate. The sequence is that of Glycine--tRNA ligase beta subunit from Yersinia pseudotuberculosis serotype O:1b (strain IP 31758).